The following is a 373-amino-acid chain: P2Y purinoceptor 1 (373 aa).

Over 1–51 (MTEVPWSAVPNGTDAAFLAGLGSLWGNSTIASTAAVSSSFRCALIKTGFQF) the chain is Extracellular. Asparagine 11 and asparagine 27 each carry an N-linked (GlcNAc...) asparagine glycan. Cystine bridges form between cysteine 42-cysteine 296 and cysteine 124-cysteine 202. Lysine 46 provides a ligand contact to ADP. Residues 52–74 (YYLPAVYILVFIIGFLGNSVAIW) form a helical membrane-spanning segment. Over 75–87 (MFVFHMKPWSGIS) the chain is Cytoplasmic. Residues 88–109 (VYMFNLALADFLYVLTLPALIF) traverse the membrane as a helical segment. Residues 110 to 125 (YYFNKTDWIFGDVMCK) are Extracellular-facing. An N-linked (GlcNAc...) asparagine glycan is attached at asparagine 113. The helical transmembrane segment at 126–147 (LQRFIFHVNLYGSILFLTCISA) threads the bilayer. At 148–166 (HRYSGVVYPLKSLGRLKKK) the chain is on the cytoplasmic side. Residues 167–188 (NAIYVSVLVWLIVVVAISPILF) form a helical membrane-spanning segment. At 189–214 (YSGTGIRKNKTVTCYDSTSDEYLRSY) the chain is on the extracellular side. The N-linked (GlcNAc...) asparagine glycan is linked to asparagine 197. An ADP-binding site is contributed by 203–205 (YDS). Residues 215–237 (FIYSMCTTVAMFCIPLVLILGCY) traverse the membrane as a helical segment. Residues 238 to 260 (GLIVRALIYKDLDNSPLRRKSIY) lie on the Cytoplasmic side of the membrane. Residues 261–284 (LVIIVLTVFAVSYIPFHVMKTMNL) form a helical membrane-spanning segment. ADP contacts are provided by residues 283-287 (NLRAR), 303-306 (YATY), and arginine 310. The Extracellular segment spans residues 285–303 (RARLDFQTPEMCDFNDRVY). The helical transmembrane segment at 304-325 (ATYQVTRGLASLNSCVDPILYF) threads the bilayer. Over 326–373 (LAGDTFRRRLSRATRKASRRSEANLQSKSEEMTLNILSEFKQNGDTSL) the chain is Cytoplasmic.

This sequence belongs to the G-protein coupled receptor 1 family. Expressed in muscle, heart, liver, kidney, lung, brain, spleen, but not in testis.

The protein resides in the cell membrane. Functionally, receptor for extracellular adenine nucleotides such as ADP. In platelets, binding to ADP leads to mobilization of intracellular calcium ions via activation of phospholipase C, a change in platelet shape, and ultimately platelet aggregation. The sequence is that of P2Y purinoceptor 1 (P2ry1) from Rattus norvegicus (Rat).